We begin with the raw amino-acid sequence, 1269 residues long: MVAVMQTDMGETENSAVRPKVTDAKGILKQNRQFLDYFWDIAKPDRQIRLKAIEDLINYLKNSEQADELKYTLKRLVDGLSHTREDARSGYSVALAQLLSVFEEISLKSTLNSVKEKHNLLTASKKLIRNAVFGNFFGVLALSQSTRLHKEPQVMLECVQLLQSLSEYREHLRDLPRKTMVDILSETSQDVFEEVLFSALQSDLTSALKSPEQLELLLVALQKFPSVLKPKKLKKLLGTTAVITKQNMPRLVEVLKTAARSVKKENILPAVALDLLQVSLREDNFEMFWTDAIITGMMSEMPGPTHYLSFRLLGASLPLLSIPQLQFVLSGDVMRQYGEHTMSAQMPDRFKFAPEMAGYVGEFMQSCTDPDKQLVVVLGFTQLTNQGNPVVPSYWKALENMHPSAVQRYVDWLIEAFCKPQLENCLDFSTRRQKGNQEAAVESESCVSRFRKWIIPRLTFIVENQQIKKQEALVMKVVRFIFFHAFFEVKKPTSEIPETTQALSVPINQQTRTAVVSGFYSLLQALNSMMVLGESVEVQGLNFRRIVGVQADGSMWIYSVFQFASMLLNQNKYVKSLQSFSPEQRQGWDSVLESVEALRKKAKTASSPEHTAFQQLFLLIGIQMFTSPEESLDLLKDLQTCMEKAQAKKSKKKKATDEPHWVEVIVEILLSLVSQPSRLVRSVCKTVFGRICPHLTQAALSSILNVLDPNKDEDESGVVVTDDKKRKLKEEDEDDDDEEEDDDNDEGDDDDDDDDEEEGGEEGEESSDSSDDEEEDEAMEEGQEVDQNFRLELMKVLQGQNALATEEDGSDDEELDDAAMMKLDGSLASLFLEQRKKIQAKKDEKDRLNKEKGLVRDFKIKVLDMVEVFLSKQGFSPLVLGMVEPLLSVIENGMSSESSQPEQDYLRRVADIFRNRLCRGKFYCKEIDGREAELHEMLERLIGRAQKLTDSSVALYYFSAALYVLKVLRGSVVDQELSTMGKVEVERATTCLKNALTSFMTKRKSPLTGAMFIDLFHRFPVLCVNLMDTALENITAGLRDHQQGQACFIMLKALQCKHVKNLMTGEQTTELYKKVVDQLTKSLENVQCKNKTAHDKVVKALELCLHVVKIVLNQKMRVNLELLQDVLASMNAEGCLEKTGKLEDTYWSVMRLFGVIKPKMEKVKKVPEAEQTEETTKKKKGFLPETKKRKNRKKPTILEGKETETPVEKTPEGASGEGKKNKNKKKNKKRKQQAGEETQDQPTPKKAKMQQQQQQKQKKKKKKKGADGE.

Residues 708 to 783 (DPNKDEDESG…EEDEAMEEGQ (76 aa)) form a disordered region. The segment covering 721 to 730 (TDDKKRKLKE) has biased composition (basic and acidic residues). Acidic residues predominate over residues 731–783 (EDEDDDDEEEDDDNDEGDDDDDDDDEEEGGEEGEESSDSSDDEEEDEAMEEGQ). Phosphoserine is present on Ser-810. The segment at 1163 to 1269 (VKKVPEAEQT…KKKKKGADGE (107 aa)) is disordered. Basic residues predominate over residues 1177–1195 (KKKKGFLPETKKRKNRKKP). Over residues 1199–1211 (EGKETETPVEKTP) the composition is skewed to basic and acidic residues. Basic residues-rich tracts occupy residues 1221 to 1232 (NKNKKKNKKRKQ) and 1256 to 1269 (KQKK…ADGE).

It belongs to the MYBBP1A family.

It is found in the nucleus. It localises to the nucleolus. In terms of biological role, may activate or repress transcription via interactions with sequence specific DNA-binding proteins. May play a role in the repression of the circadian clock gene expression. This Danio rerio (Zebrafish) protein is Myb-binding protein 1A-like protein (mybbp1a).